A 253-amino-acid polypeptide reads, in one-letter code: Salivary gland SP38-40.B protein (253 aa).

A signal peptide spans 1–21; the sequence is MRIKFLVVLAVICLLAHYASA. Disordered stretches follow at residues 23-51, 140-168, and 203-253; these read GMGG…VKAD, KDEK…KECS, and VQGK…DAKK. Composition is skewed to basic and acidic residues over residues 26–51 and 154–168; these read GDKK…VKAD and PPKE…KECS. Tandem repeats lie at residues 29–34 and 35–40. The interval 29–47 is 3 X 6 AA approximate tandem repeats of K-P-K-D-A-P; that stretch reads KPKDAPKPKDAPKPKEVKP. The stretch at 41–47 is one 1-3; approximate repeat; it reads KPKEVKP. 2 tandem repeats follow at residues 153–156 and 158–161. The interval 153–166 is 3 X 4 AA approximate tandem repeats of K-P-P-K; that stretch reads KPPKEKPPKKPRKE. Residues 162-166 form a 2-3; approximate repeat; it reads KPRKE. The span at 206-217 shows a compositional bias: basic residues; that stretch reads KQKKGAKKAKGG. A run of 6 repeats spans residues 222 to 225, 226 to 229, 230 to 233, 234 to 237, 238 to 241, and 242 to 245. Residues 222–249 are 7 X 4 AA approximate tandem repeats of P-K-P-[GAV]; that stretch reads PKPGPKPAPKPGPKPAPKPVPKPADKPK. Residues 225–243 show a composition bias toward pro residues; the sequence is GPKPAPKPGPKPAPKPVPK. Residues 244 to 253 are compositionally biased toward basic and acidic residues; that stretch reads PADKPKDAKK. A 3-7; approximate repeat occupies 246 to 249; the sequence is DKPK.

In terms of tissue distribution, salivary gland.

The protein resides in the secreted. Its function is as follows. Used by the larvae to construct a supramolecular structure, the larval tube. This is Salivary gland SP38-40.B protein (SP38-40.B) from Chironomus tentans (Midge).